The sequence spans 385 residues: MSGDSSGRGPEGRGRGRDPHRDRTRSRSRSRSPLSPRSRRGSARERREAPERPSLEDTEPSDSGDEMMDPASLEAEADQGLCRQIRHQYRALINSVQQNREDILNAGDKLTEVLEEANTLFNEVSRAREAVLDAHFLVLASDLGKEKAKQLRSDLSSFDMLRYVETLLTHMGVNPLEAEELIRDEDSPDFEFIVYDSWKITGRTAENTFNKTHTFHFLLGSIYGECPVPKPRVDRPRKVPVIQEERAMPAQLRRMEESHQEATEKEVERILGLLQTYFREDPDTPMSFFDFVVDPHSFPRTVENIFHVSFIIRDGFARIRLDQDRLPVIEPVSINEENEGFEHNTQVRNQGIIALSYRDWEEIVKTFEISEPVITPSQRQQKPSA.

The tract at residues 1–69 (MSGDSSGRGP…PSDSGDEMMD (69 aa)) is disordered. Composition is skewed to basic and acidic residues over residues 10 to 21 (PEGRGRGRDPHR) and 42 to 55 (SARE…RPSL). A compositionally biased stretch (acidic residues) spans 56–68 (EDTEPSDSGDEMM). Thr-345 is subject to Phosphothreonine. The residue at position 377 (Ser-377) is a Phosphoserine.

It belongs to the NSE4 family. Component of the SMC5-SMC6 complex which consists at least of SMC5, SMC6, NSMCE2, NSMCE1, NSMCE4A or EID3 and NSMCE3. NSMCE1, NSMCE4A or EID3 and NSMCE3 probably form a subcomplex that bridges the head domains of the SMC5:SMC6 heterodimer. Interacts with NSMCE3.

It is found in the nucleus. It localises to the chromosome. The protein localises to the telomere. Component of the SMC5-SMC6 complex, a complex involved in DNA double-strand breaks by homologous recombination. The complex may promote sister chromatid homologous recombination by recruiting the SMC1-SMC3 cohesin complex to double-strand breaks. The complex is required for telomere maintenance via recombination in ALT (alternative lengthening of telomeres) cell lines and mediates sumoylation of shelterin complex (telosome) components which is proposed to lead to shelterin complex disassembly in ALT-associated PML bodies (APBs). Is involved in positive regulation of response to DNA damage stimulus. In Homo sapiens (Human), this protein is Non-structural maintenance of chromosomes element 4 homolog A (NSMCE4A).